The sequence spans 576 residues: Aspartate--tRNA ligase (576 aa).

Glutamate 170 contacts L-aspartate. The tract at residues 194–197 (QLFK) is aspartate. L-aspartate is bound at residue arginine 216. Residues 216-218 (RDE) and glutamine 225 contribute to the ATP site. Residue histidine 438 coordinates L-aspartate. Position 471 (glutamate 471) interacts with ATP. L-aspartate is bound at residue arginine 478. 523 to 526 (GLDR) provides a ligand contact to ATP.

Belongs to the class-II aminoacyl-tRNA synthetase family. Type 1 subfamily. In terms of assembly, homodimer.

The protein resides in the cytoplasm. The catalysed reaction is tRNA(Asp) + L-aspartate + ATP = L-aspartyl-tRNA(Asp) + AMP + diphosphate. Catalyzes the attachment of L-aspartate to tRNA(Asp) in a two-step reaction: L-aspartate is first activated by ATP to form Asp-AMP and then transferred to the acceptor end of tRNA(Asp). The polypeptide is Aspartate--tRNA ligase (Fervidobacterium nodosum (strain ATCC 35602 / DSM 5306 / Rt17-B1)).